Here is a 467-residue protein sequence, read N- to C-terminus: E3 ubiquitin-protein ligase IE61 (467 aa).

The RING-type zinc finger occupies 19-58; that stretch reads CTICMSTVSDLGKTMPCLHDFCFVCIRAWTSTSVQCPLCR. 4 disordered regions span residues 101–171, 205–238, 344–364, and 413–467; these read GDVI…GVTK, QQPR…FRAT, IVRP…RDTR, and DSAC…MKKS. Over residues 116–143 the composition is skewed to polar residues; the sequence is ESIQQPTSRSSREPIQSPNPGPLQSSAR. The segment covering 149–161 has biased composition (low complexity); that stretch reads SPSDSQQDSIQPP. Positions 162–171 are enriched in polar residues; it reads TRDSSPGVTK. The segment covering 228-238 has biased composition (basic and acidic residues); that stretch reads RTMDRLPFRAT. 2 stretches are compositionally biased toward low complexity: residues 429–443 and 450–459; these read GESN…TSGS and KSSAGKAGKG.

As to quaternary structure, interacts with host BTRC; this interaction seems to inactivate SCF-mediated protein degradation in general. Auto-ubiquitinated.

It catalyses the reaction S-ubiquitinyl-[E2 ubiquitin-conjugating enzyme]-L-cysteine + [acceptor protein]-L-lysine = [E2 ubiquitin-conjugating enzyme]-L-cysteine + N(6)-ubiquitinyl-[acceptor protein]-L-lysine.. Its function is as follows. RING-finger E3 ubiquitin ligase that degrades host SP100, one of the major components of ND10 nuclear bodies, thereby disrupting the organization of these bodies. Also plays a role in the inhibition of host NF-kappa-B pathway by blocking the SCF(BTRC)-mediated addition of ubiquitin chains to host I-kappa-B-alpha/NFKBIA, thereby interfering with its degradation. This chain is E3 ubiquitin-protein ligase IE61 (61), found in Varicella-zoster virus (strain Dumas) (HHV-3).